The primary structure comprises 237 residues: Uridylate kinase (237 aa).

Residue 9–12 (KLSG) participates in ATP binding. UMP is bound at residue Gly51. Residues Gly52 and Arg56 each coordinate ATP. UMP contacts are provided by residues Asp71 and 132–139 (CGNPFFTT). The ATP site is built by Thr159, Tyr165, and Asp168.

This sequence belongs to the UMP kinase family. Homohexamer.

Its subcellular location is the cytoplasm. It catalyses the reaction UMP + ATP = UDP + ADP. It functions in the pathway pyrimidine metabolism; CTP biosynthesis via de novo pathway; UDP from UMP (UMPK route): step 1/1. With respect to regulation, inhibited by UTP. In terms of biological role, catalyzes the reversible phosphorylation of UMP to UDP. In Prochlorococcus marinus (strain NATL1A), this protein is Uridylate kinase.